A 201-amino-acid polypeptide reads, in one-letter code: MNILVIKSSVNEKKGSYSSHLSDLFIKFYLEIHPDDQIEVYDLNQFGLANTNLTMKNFEDKTFYQKAESDFWINKLRNADKIVFSTSMTNFNYSATTKNFFDAITVPNKTFLLDKNTGKYTGLLKNIQNVQILTAQGAPLGWYPFGNHSALIKQIFEFLGANVRSDFFVLDGTKVAPNNQKPIADFVAQRQNQIKILAENF.

Residues Ser-9 and 16–18 (SYS) each bind FMN.

The protein belongs to the azoreductase type 1 family. Homodimer. The cofactor is FMN.

The catalysed reaction is 2 a quinone + NADH + H(+) = 2 a 1,4-benzosemiquinone + NAD(+). The enzyme catalyses N,N-dimethyl-1,4-phenylenediamine + anthranilate + 2 NAD(+) = 2-(4-dimethylaminophenyl)diazenylbenzoate + 2 NADH + 2 H(+). Quinone reductase that provides resistance to thiol-specific stress caused by electrophilic quinones. In terms of biological role, also exhibits azoreductase activity. Catalyzes the reductive cleavage of the azo bond in aromatic azo compounds to the corresponding amines. This Mesomycoplasma hyopneumoniae (strain J / ATCC 25934 / NCTC 10110) (Mycoplasma hyopneumoniae) protein is FMN-dependent NADH:quinone oxidoreductase.